The sequence spans 205 residues: Recombination protein RecR (205 aa).

The segment at 59-74 (CSVCFHLSAEPVCEVC) adopts a C4-type zinc-finger fold. The 100-residue stretch at 82 to 181 (GTLCVVADSR…KVTRIAFGLP (100 aa)) folds into the Toprim domain.

Belongs to the RecR family.

Its function is as follows. May play a role in DNA repair. It seems to be involved in an RecBC-independent recombinational process of DNA repair. It may act with RecF and RecO. The sequence is that of Recombination protein RecR from Cyanothece sp. (strain PCC 7425 / ATCC 29141).